A 402-amino-acid polypeptide reads, in one-letter code: NADH-quinone oxidoreductase subunit D (402 aa).

Belongs to the complex I 49 kDa subunit family. NDH-1 is composed of 14 different subunits. Subunits NuoB, C, D, E, F, and G constitute the peripheral sector of the complex.

The protein localises to the cell inner membrane. The catalysed reaction is a quinone + NADH + 5 H(+)(in) = a quinol + NAD(+) + 4 H(+)(out). Functionally, NDH-1 shuttles electrons from NADH, via FMN and iron-sulfur (Fe-S) centers, to quinones in the respiratory chain. The immediate electron acceptor for the enzyme in this species is believed to be ubiquinone. Couples the redox reaction to proton translocation (for every two electrons transferred, four hydrogen ions are translocated across the cytoplasmic membrane), and thus conserves the redox energy in a proton gradient. The polypeptide is NADH-quinone oxidoreductase subunit D (Maricaulis maris (strain MCS10) (Caulobacter maris)).